Here is a 362-residue protein sequence, read N- to C-terminus: Quinolone epoxide rearrangement protein penF (362 aa).

Histidine 220 is a catalytic residue. Glutamate 222 serves as the catalytic Broensted acid.

It belongs to the quinolone epoxide rearrangement protein penF family.

It catalyses the reaction [(1'E)-5'-(3',3'-dimethyloxiran-2'-yl)-3'-hydroxy-3'-methylpent-1'-en-1'-yl]-quinolinone B = yaequinolone D. Its pathway is secondary metabolite biosynthesis. It participates in alkaloid biosynthesis. The protein operates within mycotoxin biosynthesis. Quinolone epoxide rearrangement protein; part of the gene cluster that mediates the biosynthesis of penigequinolones, potent insecticidal alkaloids that contain a highly modified 10-carbon prenyl group. The first stage is catalyzed by the nonribosomal peptide synthetase penN that condenses anthranilic acid and O-methyl-L-tyrosine to produce 4'-methoxycyclopeptin. 4'-methoxycyclopeptin is then converted to 4'-methoxydehydrocyclopeptin by the ketoglutarate-dependent dioxygenase penM through dehydrogenation to form a double bond between C-alpha and C-beta of the O-methyltyrosine side chain. PenM also converts its first product methoxydehydrocyclopeptin to 4'-methoxycyclopenin. The following conversion of 4'methoxycyclopenin into 4'-methoxyviridicatin is catalyzed by the cyclopenase penL. 4'-methoxyviridicatin is the precursor of quinolone natural products, and is further converted to quinolinone B. The prenyltransferase penI then catalyzes the canonical Friedel-Crafts alkylation of quinolinone B with dimethylallyl cation to yield dimethylallyl quinolone, which is subjected to FAD-dependent dehydrogenation by the FAD-linked oxidoreductase penH to yield conjugated aryl diene. The delta(3') double bond then serves as the site of the second alkylation with DMAPP catalyzed by the prenyltransferase penG to yield a carbenium ion intermediate, which can be attacked by H(2)O to yield a styrenyl quinolone containing a C3'-hydroxyprenyl chain, or undergo cyclization to yield yaequinolones J1 and J2. The conversion of the styrenyl quinolone into the tetrahydrofuran-containing yaequinolone C is performed by the FAD-dependent monooxygenase penE and involves epoxidation of the terminal C7'-C8' olefin, followed by epoxide ring opening initiated by the C3' hydroxyl group. The predicted cysteine hydrolase penJ acts as an epoxide hydrolase that enhances the rate of the 5-exo-tet cyclization step, increasing the yield of yaequinolone C. PenF catalyzes the cationic rearrangement of the epoxide formed by penE (before ring opening to produce yaequinolone C) into yaequinolone D. Finally, the short-chain dehydrogenase/reductase (SDR)-like reductase penD, catalyzes both the dehydration of yaequinolone D and the reduction of the resulting oxonium to yield penigequinolone. The protein is Quinolone epoxide rearrangement protein penF of Penicillium thymicola.